Here is a 233-residue protein sequence, read N- to C-terminus: Leucyl/phenylalanyl-tRNA--protein transferase (233 aa).

Belongs to the L/F-transferase family.

The protein localises to the cytoplasm. It carries out the reaction N-terminal L-lysyl-[protein] + L-leucyl-tRNA(Leu) = N-terminal L-leucyl-L-lysyl-[protein] + tRNA(Leu) + H(+). The catalysed reaction is N-terminal L-arginyl-[protein] + L-leucyl-tRNA(Leu) = N-terminal L-leucyl-L-arginyl-[protein] + tRNA(Leu) + H(+). It catalyses the reaction L-phenylalanyl-tRNA(Phe) + an N-terminal L-alpha-aminoacyl-[protein] = an N-terminal L-phenylalanyl-L-alpha-aminoacyl-[protein] + tRNA(Phe). Its function is as follows. Functions in the N-end rule pathway of protein degradation where it conjugates Leu, Phe and, less efficiently, Met from aminoacyl-tRNAs to the N-termini of proteins containing an N-terminal arginine or lysine. The chain is Leucyl/phenylalanyl-tRNA--protein transferase from Chromobacterium violaceum (strain ATCC 12472 / DSM 30191 / JCM 1249 / CCUG 213 / NBRC 12614 / NCIMB 9131 / NCTC 9757 / MK).